The chain runs to 965 residues: SKI family transcriptional corepressor 1 (965 aa).

Disordered stretches follow at residues 45-72 (TQLGPGREGSSSPNSKQELQPYSGSSAL), 278-367 (RTFS…GGGA), 410-458 (DDPV…GGGA), 530-592 (SGAP…GSYV), 615-777 (AYGA…FAPE), and 796-843 (VCTP…EDGL). Composition is skewed to gly residues over residues 283–312 (QGGGGGGANGGSGGQGKGGAGGGGGGGPGC), 356–367 (GPAGPGGPGGGA), and 418–442 (EPKGGPGTGSGGGGAGTGGGAGGPG). Residues 571-586 (LPPPLAPLPPPPPPPA) show a composition bias toward pro residues. Gly residues predominate over residues 620-632 (PARGPGPGAGSGG). The span at 641–650 (EGSSSYNSAS) shows a compositional bias: polar residues. Composition is skewed to acidic residues over residues 654-663 (DTADEPEVDV) and 670-679 (DDEDAQEETE). Positions 800–823 (EAHEPDKEDNHSPADDLETRKSYP) are enriched in basic and acidic residues. A compositionally biased stretch (polar residues) spans 824-835 (DQRSISQPSPAN). Positions 858–922 (ENLAREELQK…DTLCNELDQE (65 aa)) form a coiled coil.

It belongs to the SKI family. Interacts with LBX1. Interacts with SMAD1, SMAD2 and SMAD3. As to expression, present specifically in cerebellar Purkinje cells (at protein level).

The protein resides in the nucleus. Its function is as follows. Acts as a transcriptional corepressor of LBX1. Inhibits BMP signaling. In Homo sapiens (Human), this protein is SKI family transcriptional corepressor 1 (SKOR1).